The chain runs to 645 residues: Putative palmitoyltransferase ZDHHC13 (645 aa).

The segment at 1–73 (MDWSEGDGSH…KSSHPEDSSS (73 aa)) is disordered. At 1–314 (MDWSEGDGSH…ACLKLLNRYK (314 aa)) the chain is on the cytoplasmic side. A compositionally biased stretch (basic and acidic residues) spans 7–20 (DGSHSHGHMGDSCH). The span at 23–33 (GGGHSHGHGHS) shows a compositional bias: basic residues. Over residues 34 to 43 (HGGSGFGGFM) the composition is skewed to gly residues. 5 ANK repeats span residues 104–133 (ENVT…VIDQ), 138–167 (LNST…DPSL), 171–200 (EGYR…EVDL), 204–234 (NGQT…SVNA), and 239–268 (NRNS…SVDM). Residues 315–335 (VCLQSVFSVVVVGAFGAILDM) form a helical membrane-spanning segment. Residue Arg-336 is a topological domain, lumenal. Residues 337 to 357 (TESWLLKGILLACIMAVINLA) traverse the membrane as a helical segment. Residues 358–369 (SRQLATVAVRSL) lie on the Cytoplasmic side of the membrane. A helical transmembrane segment spans residues 370-390 (IPSTGLIASVFWMVVTWVLWF). The Lumenal segment spans residues 391–394 (LPDE). A helical membrane pass occupies residues 395–415 (PSAAVQMLFTVNITAVLYYYI). The Cytoplasmic portion of the chain corresponds to 416–492 (RSCRTDPGHV…NGCIGARNHP (77 aa)). The 51-residue stretch at 449-499 (IFCTSCMMRKPMRANHCFSCNACVAKQDHHSIWINGCIGARNHPFFVLFLV) folds into the DHHC domain. Residues 493–513 (FFVLFLVALNFLCIWMFYGSI) form a helical membrane-spanning segment. Topologically, residues 514-542 (TYWSRHCPLHYSEEGIWGALTALMGCSPW) are lumenal. Residues 543–563 (LLYVFCFVFFHTTWASILLVL) form a helical membrane-spanning segment. Residues 564–645 (QLYQIAFLGL…RDMFSSPDAV (82 aa)) lie on the Cytoplasmic side of the membrane.

The protein belongs to the DHHC palmitoyltransferase family. AKR/ZDHHC17 subfamily.

It localises to the golgi apparatus membrane. The protein localises to the cytoplasmic vesicle membrane. Functionally, putative palmitoyltransferase that could catalyze the addition of palmitate onto various protein substrates. The polypeptide is Putative palmitoyltransferase ZDHHC13 (Danio rerio (Zebrafish)).